The sequence spans 126 residues: Holo-[acyl-carrier-protein] synthase (126 aa).

The Mg(2+) site is built by Asp-9 and Glu-58.

It belongs to the P-Pant transferase superfamily. AcpS family. The cofactor is Mg(2+).

It localises to the cytoplasm. The catalysed reaction is apo-[ACP] + CoA = holo-[ACP] + adenosine 3',5'-bisphosphate + H(+). Transfers the 4'-phosphopantetheine moiety from coenzyme A to a Ser of acyl-carrier-protein. This chain is Holo-[acyl-carrier-protein] synthase, found in Escherichia fergusonii (strain ATCC 35469 / DSM 13698 / CCUG 18766 / IAM 14443 / JCM 21226 / LMG 7866 / NBRC 102419 / NCTC 12128 / CDC 0568-73).